The following is a 106-amino-acid chain: Pyrimidine/purine nucleoside phosphorylase (106 aa).

The protein belongs to the nucleoside phosphorylase PpnP family.

It catalyses the reaction a purine D-ribonucleoside + phosphate = a purine nucleobase + alpha-D-ribose 1-phosphate. The catalysed reaction is adenosine + phosphate = alpha-D-ribose 1-phosphate + adenine. It carries out the reaction cytidine + phosphate = cytosine + alpha-D-ribose 1-phosphate. The enzyme catalyses guanosine + phosphate = alpha-D-ribose 1-phosphate + guanine. It catalyses the reaction inosine + phosphate = alpha-D-ribose 1-phosphate + hypoxanthine. The catalysed reaction is thymidine + phosphate = 2-deoxy-alpha-D-ribose 1-phosphate + thymine. It carries out the reaction uridine + phosphate = alpha-D-ribose 1-phosphate + uracil. The enzyme catalyses xanthosine + phosphate = alpha-D-ribose 1-phosphate + xanthine. In terms of biological role, catalyzes the phosphorolysis of diverse nucleosides, yielding D-ribose 1-phosphate and the respective free bases. Can use uridine, adenosine, guanosine, cytidine, thymidine, inosine and xanthosine as substrates. Also catalyzes the reverse reactions. The sequence is that of Pyrimidine/purine nucleoside phosphorylase from Burkholderia vietnamiensis (strain G4 / LMG 22486) (Burkholderia cepacia (strain R1808)).